Reading from the N-terminus, the 84-residue chain is NADH dehydrogenase [ubiquinone] 1 alpha subcomplex subunit 3 (84 aa).

Position 2 is an N-acetylalanine (A2). A helical transmembrane segment spans residues 19-39 (LVVSFSVWGLAIIMPMISPYT). A disordered region spans residues 59–84 (DDGNMPDVPSHPQDPLGPSLDWLKNL).

This sequence belongs to the complex I NDUFA3 subunit family. In terms of assembly, complex I is composed of 45 different subunits.

It localises to the mitochondrion inner membrane. In terms of biological role, accessory subunit of the mitochondrial membrane respiratory chain NADH dehydrogenase (Complex I), that is believed not to be involved in catalysis. Complex I functions in the transfer of electrons from NADH to the respiratory chain. The immediate electron acceptor for the enzyme is believed to be ubiquinone. This Mus musculus (Mouse) protein is NADH dehydrogenase [ubiquinone] 1 alpha subcomplex subunit 3 (Ndufa3).